The following is a 257-amino-acid chain: 3-deoxy-manno-octulosonate cytidylyltransferase (257 aa).

This sequence belongs to the KdsB family.

It localises to the cytoplasm. The catalysed reaction is 3-deoxy-alpha-D-manno-oct-2-ulosonate + CTP = CMP-3-deoxy-beta-D-manno-octulosonate + diphosphate. It functions in the pathway nucleotide-sugar biosynthesis; CMP-3-deoxy-D-manno-octulosonate biosynthesis; CMP-3-deoxy-D-manno-octulosonate from 3-deoxy-D-manno-octulosonate and CTP: step 1/1. It participates in bacterial outer membrane biogenesis; lipopolysaccharide biosynthesis. Its function is as follows. Activates KDO (a required 8-carbon sugar) for incorporation into bacterial lipopolysaccharide in Gram-negative bacteria. This chain is 3-deoxy-manno-octulosonate cytidylyltransferase, found in Halorhodospira halophila (strain DSM 244 / SL1) (Ectothiorhodospira halophila (strain DSM 244 / SL1)).